The sequence spans 327 residues: Metal-binding protein YtgA (327 aa).

The first 20 residues, 1 to 20, serve as a signal peptide directing secretion; it reads MDAKMGYIFKVMRWIFCFVA. Residues His-73, His-139, His-205, and Asp-297 each contribute to the Fe(2+) site.

Belongs to the bacterial solute-binding protein 9 family. As to quaternary structure, monomer.

It is found in the periplasm. In terms of biological role, part of the ATP-binding cassette (ABC) transport system YtgABCD involved in metal import. Binds Fe(2+), Mn(2+) and Ni(2+), with a preference for Fe(2+) and delivers them to the membrane permease for translocation into the cytoplasm. The sequence is that of Metal-binding protein YtgA from Chlamydia pneumoniae (Chlamydophila pneumoniae).